We begin with the raw amino-acid sequence, 380 residues long: N5-carboxyaminoimidazole ribonucleotide synthase (380 aa).

ATP is bound by residues arginine 108, lysine 148, 153–159 (GYDGKGQ), 183–186 (ESWV), glutamate 191, histidine 214, and 268–269 (NE). An ATP-grasp domain is found at 112–298 (KKAIQSAGCE…QFEQHIRAVC (187 aa)).

Belongs to the PurK/PurT family. Homodimer.

The enzyme catalyses 5-amino-1-(5-phospho-beta-D-ribosyl)imidazole + hydrogencarbonate + ATP = 5-carboxyamino-1-(5-phospho-D-ribosyl)imidazole + ADP + phosphate + 2 H(+). It functions in the pathway purine metabolism; IMP biosynthesis via de novo pathway; 5-amino-1-(5-phospho-D-ribosyl)imidazole-4-carboxylate from 5-amino-1-(5-phospho-D-ribosyl)imidazole (N5-CAIR route): step 1/2. Functionally, catalyzes the ATP-dependent conversion of 5-aminoimidazole ribonucleotide (AIR) and HCO(3)(-) to N5-carboxyaminoimidazole ribonucleotide (N5-CAIR). This is N5-carboxyaminoimidazole ribonucleotide synthase from Bacillus subtilis (strain 168).